A 181-amino-acid polypeptide reads, in one-letter code: MMFNRITRSAGLLARARPTTTAVMSPMTPLAISRRGYHEKVLDHYNNPRNVGSMNKNDEDVGTGLVGAPACGDVMKLQIRVDDNGVIQDVKFKTFGCGSAIASSSYVTELVRGKSLAEAGKIKNTVIAKELSLPPVKLHCSMLAEDAIKSAISDYNSKRKTKNPTLGAEAAETPAAATATA.

The tract at residues 159–181 is disordered; it reads RKTKNPTLGAEAAETPAAATATA. Residues 168–181 are compositionally biased toward low complexity; the sequence is AEAAETPAAATATA.

Belongs to the NifU family. Component of the core Fe-S cluster (ISC) assembly machinery. It depends on [2Fe-2S] cluster as a cofactor.

It localises to the mitochondrion matrix. It participates in cofactor biosynthesis; iron-sulfur cluster biosynthesis. In terms of biological role, scaffold protein for the de novo synthesis of iron-sulfur (Fe-S) clusters within mitochondria, which is required for maturation of both mitochondrial and cytoplasmic [2Fe-2S] and [4Fe-4S] proteins. First, a [2Fe-2S] cluster is transiently assembled on the scaffold protein ISU1. In a second step, the cluster is released from ISU1, transferred to a glutaredoxin, followed by the formation of mitochondrial [2Fe-2S] proteins, the synthesis of [4Fe-4S] clusters and their target-specific insertion into the recipient apoproteins. Cluster assembly on ISU1 depends on the function of the cysteine desulfurase complex NFS1-ISD11, which serves as the sulfur donor for cluster synthesis, the iron-binding protein frataxin as the putative iron donor, and the electron transfer chain comprised of ferredoxin reductase and ferredoxin, which receive their electrons from NADH. The protein is Iron sulfur cluster assembly protein 1, mitochondrial (ISU1) of Yarrowia lipolytica (strain CLIB 122 / E 150) (Yeast).